The sequence spans 289 residues: YLVNPAGYAALGAYMFLLILIGSPVNFLTLYVTLEHKKLRTPLNYILLNLAVADLFMVLGGFTTTMYTSMHGYSVLGRLGCILEGFFATLGGEIALWSLVVLAIERWIVVCKPISNFRFTEDHAIMGLAFSWVMALACAVPPLVGWSRYIPEGMQCSCGVDYYTRAEGFNNESFVIYMFIVHFLIPLSVIFFCYGRLLCAVKEAAAAQQESETTQRPEKEVTRMVVIMVIAFLVCCLPNASVAWWIFCNQGSDFGPIFMTLPSFFAKSAAIYNPMIYICMNKQFRHCMI.

Residues 1–7 (YLVNPAG) lie on the Extracellular side of the membrane. Residues 8-32 (YAALGAYMFLLILIGSPVNFLTLYV) traverse the membrane as a helical segment. The Cytoplasmic segment spans residues 33 to 44 (TLEHKKLRTPLN). Residues 45-67 (YILLNLAVADLFMVLGGFTTTMY) traverse the membrane as a helical segment. Residues 68–81 (TSMHGYSVLGRLGC) lie on the Extracellular side of the membrane. A disulfide bond links Cys81 and Cys158. A helical transmembrane segment spans residues 82 to 104 (ILEGFFATLGGEIALWSLVVLAI). Residues 105–107 (ERW) carry the 'Ionic lock' involved in activated form stabilization motif. The Cytoplasmic portion of the chain corresponds to 105 to 123 (ERWIVVCKPISNFRFTEDH). A helical membrane pass occupies residues 124-144 (AIMGLAFSWVMALACAVPPLV). Topologically, residues 145 to 173 (GWSRYIPEGMQCSCGVDYYTRAEGFNNES) are extracellular. A glycan (N-linked (GlcNAc...) asparagine) is linked at Asn171. Residues 174-195 (FVIYMFIVHFLIPLSVIFFCYG) traverse the membrane as a helical segment. Residues 196–223 (RLLCAVKEAAAAQQESETTQRPEKEVTR) are Cytoplasmic-facing. A helical transmembrane segment spans residues 224 to 245 (MVVIMVIAFLVCCLPNASVAWW). The Extracellular portion of the chain corresponds to 246–257 (IFCNQGSDFGPI). Residues 258–279 (FMTLPSFFAKSAAIYNPMIYIC) form a helical membrane-spanning segment. Lys267 is modified (N6-(retinylidene)lysine). Residues 280-289 (MNKQFRHCMI) lie on the Cytoplasmic side of the membrane.

The protein belongs to the G-protein coupled receptor 1 family. Opsin subfamily. Phosphorylated on some or all of the serine and threonine residues present in the C-terminal region. Post-translationally, contains one covalently linked retinal chromophore.

It localises to the membrane. Its subcellular location is the cell projection. It is found in the cilium. The protein localises to the photoreceptor outer segment. Its function is as follows. Photoreceptor required for image-forming vision at low light intensity. While most salt water fish species use retinal as chromophore, most freshwater fish use 3-dehydroretinal, or a mixture of retinal and 3-dehydroretinal. Light-induced isomerization of 11-cis to all-trans retinal triggers a conformational change that activates signaling via G-proteins. Subsequent receptor phosphorylation mediates displacement of the bound G-protein alpha subunit by arrestin and terminates signaling. The sequence is that of Rhodopsin (rho) from Limnocottus bergianus.